A 362-amino-acid polypeptide reads, in one-letter code: 2-aminoethylphosphonate--pyruvate transaminase (362 aa).

Lys193 bears the N6-(pyridoxal phosphate)lysine mark.

Belongs to the class-V pyridoxal-phosphate-dependent aminotransferase family. PhnW subfamily. As to quaternary structure, homodimer. Pyridoxal 5'-phosphate serves as cofactor.

It catalyses the reaction (2-aminoethyl)phosphonate + pyruvate = phosphonoacetaldehyde + L-alanine. Its function is as follows. Involved in phosphonate degradation. This Phocaeicola vulgatus (strain ATCC 8482 / DSM 1447 / JCM 5826 / CCUG 4940 / NBRC 14291 / NCTC 11154) (Bacteroides vulgatus) protein is 2-aminoethylphosphonate--pyruvate transaminase.